The chain runs to 450 residues: ATP-dependent protease ATPase subunit HslU (450 aa).

ATP is bound by residues valine 29, 71 to 76, aspartate 261, glutamate 328, and arginine 400; that span reads GVGKTE.

This sequence belongs to the ClpX chaperone family. HslU subfamily. In terms of assembly, a double ring-shaped homohexamer of HslV is capped on each side by a ring-shaped HslU homohexamer. The assembly of the HslU/HslV complex is dependent on binding of ATP.

The protein localises to the cytoplasm. ATPase subunit of a proteasome-like degradation complex; this subunit has chaperone activity. The binding of ATP and its subsequent hydrolysis by HslU are essential for unfolding of protein substrates subsequently hydrolyzed by HslV. HslU recognizes the N-terminal part of its protein substrates and unfolds these before they are guided to HslV for hydrolysis. The polypeptide is ATP-dependent protease ATPase subunit HslU (Rickettsia prowazekii (strain Madrid E)).